The primary structure comprises 65 residues: Large ribosomal subunit protein uL29 (65 aa).

The protein belongs to the universal ribosomal protein uL29 family.

The protein is Large ribosomal subunit protein uL29 of Bacteroides fragilis (strain ATCC 25285 / DSM 2151 / CCUG 4856 / JCM 11019 / LMG 10263 / NCTC 9343 / Onslow / VPI 2553 / EN-2).